Reading from the N-terminus, the 381-residue chain is Arf-GAP with dual PH domain-containing protein 2 (381 aa).

Residues Lys-9–Pro-132 form the Arf-GAP domain. The C4-type zinc finger occupies Cys-25–Cys-48. PH domains are found at residues Pro-132 to Leu-233 and Asn-255 to Ser-361.

The protein resides in the cytoplasm. It localises to the cell membrane. In terms of biological role, GTPase-activating protein for the ADP ribosylation factor family (Potential). Binds phosphatidylinositol 3,4,5-trisphosphate (PtdInsP3) and inositol 1,3,4,5-tetrakisphosphate (InsP4). Possesses a stoichiometry of two binding sites for InsP4 with identical affinity. The sequence is that of Arf-GAP with dual PH domain-containing protein 2 (Adap2) from Mus musculus (Mouse).